Here is a 705-residue protein sequence, read N- to C-terminus: MGQEKHVFTIDWAGRTLTVETGQLAKQANGAVMIRYGDTAVLSTATASKEPKPLDFFPLTVNYEERLYAVGKIPGGFIKREGRPSEKAVLASRLIDRPIRPLFADGFRNEVQVISIVMSVDQNCSSEMAAMFGSSLALSVSDIPFEGPIAGVTVGRIDDQFIINPTVDQLEKSDINLVVAGTKDAINMVEAGADEVPEEIMLEAIMFGHEEIKRLIAFQEEIVAAVGKEKSEIKLFEIDEELNEKVKALAEEDLLKAIQVHEKHAREDAINEVKNAVVAKFEDEEHDEDTIKQVKQILSKLVKNEVRRLITEEKVRPDGRGVDQIRPLSSEVGLLPRTHGSGLFTRGQTQALSVCTLGALGDVQILDGLGVEESKRFMHHYNFPQFSVGETGPMRGPGRREIGHGALGERALEPVIPSEKDFPYTVRLVSEVLESNGSTSQASICASTLAMMDAGVPIKAPVAGIAMGLVKSGEHYTVLTDIQGMEDALGDMDFKVAGTEKGVTALQMDIKIEGLSREILEEALQQAKKGRMEILNSMLATLSESRKELSRYAPKILTMTINPDKIRDVIGPSGKQINKIIEETGVKIDIEQDGTIFISSTDESGNQKAKKIIEDLVREVEVGQLYLGKVKRIEKFGAFVEIFSGKDGLVHISELALERVGKVEDVVKIGDEILVKVTEIDKQGRVNLSRKAVLREEKEKEEQQS.

2 residues coordinate Mg(2+): D487 and D493. The 60-residue stretch at 554-613 (PKILTMTINPDKIRDVIGPSGKQINKIIEETGVKIDIEQDGTIFISSTDESGNQKAKKII) folds into the KH domain. One can recognise an S1 motif domain in the interval 623 to 691 (GQLYLGKVKR…KQGRVNLSRK (69 aa)).

This sequence belongs to the polyribonucleotide nucleotidyltransferase family. As to quaternary structure, homodimer. Component of a possible RNA degradosome complex composed of rny, rnjA, rnjB, pnp, pfkA and eno (although rnjA and rnjB's presence is unclear). RNA helicase CshA may also be a member of this complex. It depends on Mg(2+) as a cofactor.

The protein localises to the cytoplasm. It catalyses the reaction RNA(n+1) + phosphate = RNA(n) + a ribonucleoside 5'-diphosphate. Its function is as follows. Involved in mRNA degradation. Catalyzes the phosphorolysis of single-stranded polyribonucleotides processively in the 3'- to 5'-direction. Necessary for competence development in Bacillus subtilis. May be necessary for modification of the srfA transcript (stabilization or translation activation). Involved in processing precursor type I toxin-antitoxin RNAs antitoxin SR4 and SR5 RNAs to their mature forms. This chain is Polyribonucleotide nucleotidyltransferase, found in Bacillus subtilis (strain 168).